The chain runs to 361 residues: Alternative oxidase, mitochondrial (361 aa).

Residues 156–178 (YLVRNVFLESVAGVPGMVAGMLR) traverse the membrane as a helical segment. Fe cation is bound by residues E164, E203, and H206. A helical membrane pass occupies residues 218-240 (WFMRLAVLGAQGVFFNAMFLSYL). E254, E309, and H312 together coordinate Fe cation. The segment covering 318 to 328 (TLGNLDQNSDP) has biased composition (polar residues). Positions 318–361 (TLGNLDQNSDPNPYASKYDNPNVPHPRKDIKYLKPSGWEREEVM) are disordered. The span at 343–361 (PRKDIKYLKPSGWEREEVM) shows a compositional bias: basic and acidic residues.

This sequence belongs to the alternative oxidase family. Requires Fe cation as cofactor.

It is found in the mitochondrion inner membrane. Its function is as follows. Catalyzes cyanide-resistant oxygen consumption. May increase respiration when the cytochrome respiratory pathway is restricted, or in response to low temperatures. The chain is Alternative oxidase, mitochondrial (AOX1) from Venturia inaequalis (Apple scab fungus).